A 637-amino-acid chain; its full sequence is 3D-(3,5/4)-trihydroxycyclohexane-1,2-dione hydrolase (637 aa).

Thiamine diphosphate is bound at residue Glu-66. The segment at 442-522 (SLPGDLQRLW…INVLLFDNSG (81 aa)) is thiamine pyrophosphate binding. Mg(2+) is bound by residues Asp-493 and Asn-520.

Belongs to the TPP enzyme family. Mg(2+) serves as cofactor. It depends on thiamine diphosphate as a cofactor.

The catalysed reaction is 3D-3,5/4-trihydroxycyclohexane-1,2-dione + H2O = 5-deoxy-D-glucuronate + H(+). Its pathway is polyol metabolism; myo-inositol degradation into acetyl-CoA; acetyl-CoA from myo-inositol: step 3/7. Its function is as follows. Involved in the cleavage of the C1-C2 bond of 3D-(3,5/4)-trihydroxycyclohexane-1,2-dione (THcHDO) to yield 5-deoxy-glucuronate (5DG). This is 3D-(3,5/4)-trihydroxycyclohexane-1,2-dione hydrolase from Bacillus velezensis (strain DSM 23117 / BGSC 10A6 / LMG 26770 / FZB42) (Bacillus amyloliquefaciens subsp. plantarum).